The chain runs to 569 residues: MRVSKYLLSTQKETPANAEVVSHQLMLRAGMIRRNASGLYSWLPSGLRVLRKVEAIVREEMNNAGAVEILMPMVQPADLWVETGRWDKFGPELLRFQDRHNRDFVLGPTHEEVITDIIRKEVSSYKQLPLNLYQIQTKFRDEVRPRFGVMRSREFLMKDAYSFHLDQETMDDTYQAMYTAYSNILGRMGLAFRPVLADTGSIGGSMSHEFHVLANSGEDLIAYSTESDYAANIEKAEAPMPTEPRGAATMEMSVIDTPNAKTIEELVEQHGIAIEKTIKTIIVKGASEEAPLVAVIVRGDHELNEVKVEKLDAVLAPFEMAGEAEIRDALGAGPGSLGPVGMTIPVYVDHSVNVMSDFAAGANQDGKHYVGINWERDLPQAEVADLRNVIEGEPSPCGKGTIGLLRGIEVGHIFQLGTNYSKAMGASVLDENGKAQTLLMGCYGVGVSRIVAAAIEQNHDDRGIIWPAAIAPFKVGILPMNMHKSHRIKDMAEKLYSDLSDAGIEVLFDDRKERPGVMFADMELIGLPHVIVIGERNIDNGVFEYKNRRTGEKQEIPFEEIVDFIKSAK.

This sequence belongs to the class-II aminoacyl-tRNA synthetase family. ProS type 1 subfamily. In terms of assembly, homodimer.

The protein localises to the cytoplasm. The catalysed reaction is tRNA(Pro) + L-proline + ATP = L-prolyl-tRNA(Pro) + AMP + diphosphate. Functionally, catalyzes the attachment of proline to tRNA(Pro) in a two-step reaction: proline is first activated by ATP to form Pro-AMP and then transferred to the acceptor end of tRNA(Pro). As ProRS can inadvertently accommodate and process non-cognate amino acids such as alanine and cysteine, to avoid such errors it has two additional distinct editing activities against alanine. One activity is designated as 'pretransfer' editing and involves the tRNA(Pro)-independent hydrolysis of activated Ala-AMP. The other activity is designated 'posttransfer' editing and involves deacylation of mischarged Ala-tRNA(Pro). The misacylated Cys-tRNA(Pro) is not edited by ProRS. This chain is Proline--tRNA ligase, found in Shewanella loihica (strain ATCC BAA-1088 / PV-4).